A 322-amino-acid polypeptide reads, in one-letter code: Beta-ketoacyl-[acyl-carrier-protein] synthase III (322 aa).

Catalysis depends on residues Cys-113 and His-249. The interval 250–254 is ACP-binding; sequence QANIR. Asn-279 is a catalytic residue.

It belongs to the thiolase-like superfamily. FabH family. In terms of assembly, homodimer.

Its subcellular location is the cytoplasm. The catalysed reaction is malonyl-[ACP] + acetyl-CoA + H(+) = 3-oxobutanoyl-[ACP] + CO2 + CoA. It functions in the pathway lipid metabolism; fatty acid biosynthesis. Functionally, catalyzes the condensation reaction of fatty acid synthesis by the addition to an acyl acceptor of two carbons from malonyl-ACP. Catalyzes the first condensation reaction which initiates fatty acid synthesis and may therefore play a role in governing the total rate of fatty acid production. Possesses both acetoacetyl-ACP synthase and acetyl transacylase activities. Its substrate specificity determines the biosynthesis of branched-chain and/or straight-chain of fatty acids. The protein is Beta-ketoacyl-[acyl-carrier-protein] synthase III of Thioalkalivibrio sulfidiphilus (strain HL-EbGR7).